Here is a 190-residue protein sequence, read N- to C-terminus: Protein GrpE (190 aa).

Residues methionine 1 to glutamate 42 form a disordered region. Positions glutamate 26–glutamate 42 are enriched in acidic residues.

Belongs to the GrpE family. As to quaternary structure, homodimer.

Its subcellular location is the cytoplasm. Participates actively in the response to hyperosmotic and heat shock by preventing the aggregation of stress-denatured proteins, in association with DnaK and GrpE. It is the nucleotide exchange factor for DnaK and may function as a thermosensor. Unfolded proteins bind initially to DnaJ; upon interaction with the DnaJ-bound protein, DnaK hydrolyzes its bound ATP, resulting in the formation of a stable complex. GrpE releases ADP from DnaK; ATP binding to DnaK triggers the release of the substrate protein, thus completing the reaction cycle. Several rounds of ATP-dependent interactions between DnaJ, DnaK and GrpE are required for fully efficient folding. The protein is Protein GrpE of Oceanobacillus iheyensis (strain DSM 14371 / CIP 107618 / JCM 11309 / KCTC 3954 / HTE831).